The chain runs to 667 residues: Protein MAIN-LIKE 2 (667 aa).

Position 1 is an N-acetylmethionine (M1). Basic residues predominate over residues 492–508 (MRGKERVRRKGMGKRRK). Disordered stretches follow at residues 492–523 (MRGKERVRRKGMGKRRKGIDPMEDYGGSEDES) and 594–667 (KLQE…TVVA). A compositionally biased stretch (acidic residues) spans 512–523 (PMEDYGGSEDES). Composition is skewed to basic and acidic residues over residues 608–618 (YDVKKEDKESK) and 656–667 (SLDRRGENTVVA).

As to expression, expressed in root tips, the shoot apical meristem (SAM), leaves, mature flowers and embryos.

It is found in the nucleus. Its function is as follows. Maybe required to maintain cell division activity in meristematic cells. The protein is Protein MAIN-LIKE 2 of Arabidopsis thaliana (Mouse-ear cress).